A 987-amino-acid polypeptide reads, in one-letter code: VPS35 endosomal protein sorting factor-like (987 aa).

Over residues 1 to 23 (MAERQSASSPTPSSPPQQQQQTP) the composition is skewed to low complexity. Residues 1 to 115 (MAERQSASSP…DPLNNPLEKK (115 aa)) are disordered. The span at 43–63 (NGREVERHPLNSITKTEDTGK) shows a compositional bias: basic and acidic residues. Residues 66–111 (QSSLSSNASSLQSAAAAASSSTATTDIDPLNNNNNNNTDIDPLNNP) show a composition bias toward low complexity.

It belongs to the VPS35L family. Component of the heterotrimeric retriever complex.

Its subcellular location is the endosome. Its function is as follows. Acts as a component of the retriever complex. The retriever complex is a heterotrimeric complex related to retromer cargo-selective complex (CSC) and essential for retromer-independent retrieval and recycling of numerous cargos. The chain is VPS35 endosomal protein sorting factor-like from Dictyostelium discoideum (Social amoeba).